We begin with the raw amino-acid sequence, 427 residues long: Serine--tRNA ligase (427 aa).

230 to 232 contacts L-serine; the sequence is TSE. ATP is bound by residues 260–262 and valine 276; that span reads RRE. Glutamate 283 is an L-serine binding site. Position 347 to 350 (347 to 350) interacts with ATP; the sequence is ELTS. Residue threonine 387 participates in L-serine binding.

It belongs to the class-II aminoacyl-tRNA synthetase family. Type-1 seryl-tRNA synthetase subfamily. As to quaternary structure, homodimer. The tRNA molecule binds across the dimer.

It is found in the cytoplasm. The catalysed reaction is tRNA(Ser) + L-serine + ATP = L-seryl-tRNA(Ser) + AMP + diphosphate + H(+). It catalyses the reaction tRNA(Sec) + L-serine + ATP = L-seryl-tRNA(Sec) + AMP + diphosphate + H(+). The protein operates within aminoacyl-tRNA biosynthesis; selenocysteinyl-tRNA(Sec) biosynthesis; L-seryl-tRNA(Sec) from L-serine and tRNA(Sec): step 1/1. In terms of biological role, catalyzes the attachment of serine to tRNA(Ser). Is also able to aminoacylate tRNA(Sec) with serine, to form the misacylated tRNA L-seryl-tRNA(Sec), which will be further converted into selenocysteinyl-tRNA(Sec). This is Serine--tRNA ligase from Micrococcus luteus (strain ATCC 4698 / DSM 20030 / JCM 1464 / CCM 169 / CCUG 5858 / IAM 1056 / NBRC 3333 / NCIMB 9278 / NCTC 2665 / VKM Ac-2230) (Micrococcus lysodeikticus).